Reading from the N-terminus, the 243-residue chain is MRYLVDTHTHTIVSGHAYTTFLENVQEASNIGLKVLGTTDHGPSMPGGPNLFYFNNFKVMPRKLKGVTLLHGCEANIIDFKGMLDIPDFTQKKLDVIIASLHDVCIRPGSMEENTEALINVMENPYVDILGHIGNPSFPINEEVVVKKAKEKNVLIEINNGSFVSRKGSEETCKKVANLCKKHKVNIIVGSDSHVCFQIGRFPKADNMLKEIGMPEELIINNEENKILEYLKNKGKLKDLNLD.

9 residues coordinate Zn(2+): His-8, His-10, His-16, His-41, Glu-74, His-102, His-132, Asp-192, and His-194.

This sequence belongs to the PHP family. It depends on Zn(2+) as a cofactor.

This is Probable phosphatase CLI_3563 from Clostridium botulinum (strain Langeland / NCTC 10281 / Type F).